A 462-amino-acid polypeptide reads, in one-letter code: uncharacterized protein (462 aa).

2 helical membrane-spanning segments follow: residues 381-401 (WILG…FKGM) and 433-453 (LWIL…NLYI).

It localises to the cell membrane. This is an uncharacterized protein from Methanocaldococcus jannaschii (strain ATCC 43067 / DSM 2661 / JAL-1 / JCM 10045 / NBRC 100440) (Methanococcus jannaschii).